We begin with the raw amino-acid sequence, 258 residues long: MIQIDALPAFNDNYIWLLQDATSRRCAVVDPGDARPVEAWLAAHPDWRLSDILVTHHHHDHVGGVAALKELSGARVLGPANEKIPARDLALEDGERVEVLGLVFEIFHVPGHTLGHIAYYHAAQTPLLFCGDTLFAAGCGRLFEGTPAQMHRSLARLAALPANTRVYCTHEYTLSNLRFALAVEPENQALRERFEEATRLRERDRITLPSEISLELSTNPFLRVSENSVKKKADQRSGQQNRTPEEVFAVLRAWKDQF.

Residues histidine 56, histidine 58, aspartate 60, histidine 61, histidine 112, aspartate 132, and histidine 170 each coordinate Zn(2+).

It belongs to the metallo-beta-lactamase superfamily. Glyoxalase II family. As to quaternary structure, monomer. Requires Zn(2+) as cofactor.

It carries out the reaction an S-(2-hydroxyacyl)glutathione + H2O = a 2-hydroxy carboxylate + glutathione + H(+). It functions in the pathway secondary metabolite metabolism; methylglyoxal degradation; (R)-lactate from methylglyoxal: step 2/2. Functionally, thiolesterase that catalyzes the hydrolysis of S-D-lactoyl-glutathione to form glutathione and D-lactic acid. In Pseudomonas paraeruginosa (strain DSM 24068 / PA7) (Pseudomonas aeruginosa (strain PA7)), this protein is Hydroxyacylglutathione hydrolase.